The chain runs to 249 residues: Inhibitor of growth protein 4 (249 aa).

Residues 25–118 (FQLMRDLDQR…ADLKEKQIES (94 aa)) are a coiled coil. N6-acetyllysine occurs at positions 112, 127, and 129. Residues 115–163 (QIESSDYDSSSSKGKKKGRTQKEKKAARARSKGKNSDEEAPKAAQKKLK) are disordered. Residues 127 to 148 (KGKKKGRTQKEKKAARARSKGK) carry the Bipartite nuclear localization signal motif. Arg133 is subject to Citrulline. 3 positions are modified to N6-acetyllysine: Lys146, Lys148, and Lys156. Arg166 bears the Citrulline mark. The PHD-type zinc finger occupies 196 to 245 (PTYCLCHQVSYGEMIGCDNPDCSIEWFHFACVGLTTKPRGKWFCPRCSQE). Zn(2+)-binding residues include Cys199, Cys201, Cys212, Cys217, His223, Cys226, Cys239, and Cys242.

The protein belongs to the ING family. As to quaternary structure, homodimer. Component of the HBO1 complex composed of KAT7/HBO1, MEAF6, ING4 or ING5, and one scaffold subunit: complexes containing BRPF scaffold (BRPF1, BRD1/BRPF2 or BRPF3) direct KAT7/HBO1 specificity towards H3K14ac, while complexes containing JADE scaffold (JADE1, JADE2 and JADE3) mediate acetylation of histone H4. Interacts with H3K4me3 and to a lesser extent with H3K4me2, the interaction augments KAT7/HBO1 acetylation activity on H3 tails. Interacts with EP300, RELA and TP53; these interactions may be indirect. Interacts with EGLN1. Interacts with BCL2A1. Post-translationally, citrullination by PADI4 within the nuclear localization signal disrupts the interaction with p53 and increases susceptibility to degradation. As to expression, isoform 2, isoform 3, isoform 4 and isoform 5 are expressed in the mammary gland, ovary, spleen and muscle. Expressed in the mammary gland, ovary, spleen and muscle.

It is found in the nucleus. Its function is as follows. Component of HBO1 complexes, which specifically mediate acetylation of histone H3 at 'Lys-14' (H3K14ac), and have reduced activity toward histone H4. Through chromatin acetylation it may function in DNA replication. May inhibit tumor progression by modulating the transcriptional output of signaling pathways which regulate cell proliferation. Can suppress brain tumor angiogenesis through transcriptional repression of RELA/NFKB3 target genes when complexed with RELA. May also specifically suppress loss of contact inhibition elicited by activated oncogenes such as MYC. Represses hypoxia inducible factor's (HIF) activity by interacting with HIF prolyl hydroxylase 2 (EGLN1). Can enhance apoptosis induced by serum starvation in mammary epithelial cell line HC11. The protein is Inhibitor of growth protein 4 (Ing4) of Mus musculus (Mouse).